A 508-amino-acid chain; its full sequence is UTP--glucose-1-phosphate uridylyltransferase (508 aa).

Ser-13 bears the Phosphoserine mark. UTP contacts are provided by residues 113-116 (LNGG), Lys-127, Gln-190, and Gly-222. Substrate is bound at residue 115–116 (GG). Lys-127 is a binding site for Mg(2+). Residues His-223 and 251 to 253 (NID) each bind substrate. UTP-binding residues include Asp-253 and Lys-396. Asp-253 is a Mg(2+) binding site. The active site involves Lys-396. Thr-426 is modified (phosphothreonine). Ser-434 carries the post-translational modification Phosphoserine. N6-acetyllysine is present on Lys-438. Residues Ser-448 and Ser-461 each carry the phosphoserine modification. Residues 457 to 508 (HLTVSGDVTFGKNVSLKGTVIIIXNHGDRIDIPPGAVLENKIVSGNLRILDH) form an oligomerization region. The critical for end-to-end subunit interaction stretch occupies residues 502–503 (NL).

It belongs to the UDPGP type 1 family. In terms of assembly, homooctamer.

It is found in the cytoplasm. The catalysed reaction is alpha-D-glucose 1-phosphate + UTP + H(+) = UDP-alpha-D-glucose + diphosphate. It participates in glycan biosynthesis; glycogen biosynthesis. Its function is as follows. UTP--glucose-1-phosphate uridylyltransferase catalyzing the conversion of glucose-1-phosphate into UDP-glucose, a crucial precursor for the production of glycogen. This is UTP--glucose-1-phosphate uridylyltransferase (UGP2) from Sus scrofa (Pig).